The following is a 325-amino-acid chain: NADH-quinone oxidoreductase subunit H (325 aa).

The next 8 membrane-spanning stretches (helical) occupy residues 11 to 31 (ILISVLKAVVILLVVVTCGAF), 81 to 101 (AIFTLAPVIAFTSLLLSFAIV), 114 to 134 (IGILFFLMMAGLAVYAVLFAG), 154 to 174 (LSYEVFLGLSLMGVVAQVGSF), 186 to 206 (VWNVIPQFFGFLTFAIAGVAV), 237 to 257 (FFVGEYIGIVTVSALIVTLFF), 265 to 285 (LPPFIWFALKTAFFMVMFILI), and 304 to 324 (VCLPLTLLNLLATAAVILYNA).

This sequence belongs to the complex I subunit 1 family. As to quaternary structure, NDH-1 is composed of 13 different subunits. Subunits NuoA, H, J, K, L, M, N constitute the membrane sector of the complex.

It is found in the cell inner membrane. The catalysed reaction is a quinone + NADH + 5 H(+)(in) = a quinol + NAD(+) + 4 H(+)(out). Functionally, NDH-1 shuttles electrons from NADH, via FMN and iron-sulfur (Fe-S) centers, to quinones in the respiratory chain. The immediate electron acceptor for the enzyme in this species is believed to be ubiquinone. Couples the redox reaction to proton translocation (for every two electrons transferred, four hydrogen ions are translocated across the cytoplasmic membrane), and thus conserves the redox energy in a proton gradient. This subunit may bind ubiquinone. The chain is NADH-quinone oxidoreductase subunit H from Yersinia pseudotuberculosis serotype O:3 (strain YPIII).